Here is a 133-residue protein sequence, read N- to C-terminus: Antifungal protein ginkbilobin-like protein 1 (133 aa).

The signal sequence occupies residues 1–24 (MSMGSFGFALAVMVLAVLVASAAG). The Gnk2-homologous domain occupies 28–133 (TNFVSSACNT…CFIRYEQYSI (106 aa)). 3 disulfide bridges follow: C35–C111, C87–C96, and C99–C124. An alpha-D-mannopyranose-binding site is contributed by N36. Alpha-D-mannopyranose is bound by residues R118 and E129.

Its function is as follows. Exerts antifungal activity through its carbohydrate-binding specificity. This is Antifungal protein ginkbilobin-like protein 1 from Picea sitchensis (Sitka spruce).